We begin with the raw amino-acid sequence, 435 residues long: Light-independent protochlorophyllide reductase subunit N (435 aa).

[4Fe-4S] cluster contacts are provided by Cys23, Cys48, and Cys108.

It belongs to the BchN/ChlN family. In terms of assembly, protochlorophyllide reductase is composed of three subunits; ChlL, ChlN and ChlB. Forms a heterotetramer of two ChlB and two ChlN subunits. [4Fe-4S] cluster is required as a cofactor.

It localises to the plastid. It is found in the chloroplast. The catalysed reaction is chlorophyllide a + oxidized 2[4Fe-4S]-[ferredoxin] + 2 ADP + 2 phosphate = protochlorophyllide a + reduced 2[4Fe-4S]-[ferredoxin] + 2 ATP + 2 H2O. It functions in the pathway porphyrin-containing compound metabolism; chlorophyll biosynthesis (light-independent). Its function is as follows. Component of the dark-operative protochlorophyllide reductase (DPOR) that uses Mg-ATP and reduced ferredoxin to reduce ring D of protochlorophyllide (Pchlide) to form chlorophyllide a (Chlide). This reaction is light-independent. The NB-protein (ChlN-ChlB) is the catalytic component of the complex. In Chlorella vulgaris (Green alga), this protein is Light-independent protochlorophyllide reductase subunit N.